Reading from the N-terminus, the 1482-residue chain is Lysine-specific demethylase rbr-2 (1482 aa).

Residues 1–45 (MRGRRQEDIATTSSAPSTSTSHKKKTVSSNGSFRPRTQSNPGGKM) are disordered. Low complexity predominate over residues 11-20 (TTSSAPSTST). Positions 30-41 (NGSFRPRTQSNP) are enriched in polar residues. The JmjN domain occupies 61 to 102 (APVYYPTSEEFADPIEYVAKIRPDAERYGVVKIVPPSDFKPP). The region spanning 126–223 (VKEKHTFIER…HIEPFNRNLK (98 aa)) is the ARID domain. Residues 244–316 (YQHHHGTMRS…SKTEEDEEEN (73 aa)) form a disordered region. The segment covering 251-264 (MRSEPENTDGKNTE) has biased composition (basic and acidic residues). Basic residues predominate over residues 277 to 288 (GRRRSKNKKPVP). The PHD-type 1 zinc-finger motif lies at 322–374 (QVYCVSCNEGKDEDLLLLCDIEGCNSGRHTYCCDPVLDEVPEGEWRCPKCIES). Residues 471-637 (QYANHAWNLN…KGRECVQSYS (167 aa)) form the JmjC domain. Fe cation contacts are provided by His-517, Asp-520, and His-605. A PHD-type 2 zinc finger spans residues 1206 to 1260 (LEGCCCLGGNKSDSSESVLSCIMCESQFHVRCCEWSTFFQHLPKGCFMCVRCLRG). The tract at residues 1361 to 1403 (QQRPVKSKPSASLFDPKLNSKRKRPNPSQKDSSKSKSRKRQGQ) is disordered. A PHD-type 3 zinc finger spans residues 1416–1471 (FKSCQARSCLKPFGDSVNWVMCDAGCKNWFHVICVGFTLREINDMHEYRCSSCLDH).

It belongs to the JARID1 histone demethylase family. It depends on Fe(2+) as a cofactor.

It localises to the nucleus. The enzyme catalyses N(6),N(6),N(6)-trimethyl-L-lysyl(4)-[histone H3] + 3 2-oxoglutarate + 3 O2 = L-lysyl(4)-[histone H3] + 3 formaldehyde + 3 succinate + 3 CO2. Its function is as follows. Histone demethylase that specifically demethylates 'Lys-4' of histone H3, thereby playing a central role in histone code. Does not demethylate histone H3 'Lys-9', H3 'Lys-27', H3 'Lys-36', H3 'Lys-79' or H4 'Lys-20'. Demethylates trimethylated and dimethylated but not monomethylated H3 'Lys-4'. Involved in larval development and vulva formation. This Caenorhabditis briggsae protein is Lysine-specific demethylase rbr-2 (rbr-2).